The primary structure comprises 256 residues: E3 ubiquitin-protein ligase MIR2 (256 aa).

Over 1-83 the chain is Cytoplasmic; the sequence is MASKDVEEGV…NLWPEMERQE (83 aa). The segment at 7 to 66 adopts an RING-CH-type zinc-finger fold; sequence EEGVEGPICWICREEVGNEGIHPCACTGELDVVHPQCLSTWLTVSRNTACQMCRVIYRTR. Zn(2+)-binding residues include cysteine 15, cysteine 18, cysteine 30, cysteine 32, histidine 40, cysteine 43, cysteine 56, and cysteine 59. Residues 84-104 traverse the membrane as a helical segment; sequence IFELFLLMSVVVAGLVGVALC. The Extracellular segment spans residues 105–124; that stretch reads TWTLLVILTAPAGTFSPGAV. Residues 125–145 traverse the membrane as a helical segment; sequence LGFLCFFGFYQIFIVFAFGGI. Over 146 to 256 the chain is Cytoplasmic; sequence CRVSGTVRAL…VRKNHPKNNG (111 aa). The disordered stretch occupies residues 179-256; that stretch reads DNIELTVLVG…VRKNHPKNNG (78 aa). The span at 193 to 203 shows a compositional bias: acidic residues; that stretch reads TDEEPTDESSE. Basic residues predominate over residues 245–256; that stretch reads KPVRKNHPKNNG.

Binds human MHC-I, CD86, ICAM1 and CD1D.

It localises to the host cell membrane. It is found in the host endoplasmic reticulum. It carries out the reaction S-ubiquitinyl-[E2 ubiquitin-conjugating enzyme]-L-cysteine + [acceptor protein]-L-lysine = [E2 ubiquitin-conjugating enzyme]-L-cysteine + N(6)-ubiquitinyl-[acceptor protein]-L-lysine.. Its pathway is protein modification; protein ubiquitination. In terms of biological role, membrane-bound E3 ubiquitin ligase expressed at the immediate early stage of viral reactivation to mediate polyubiquitination of various host membrane proteins related to the immune response. Promotes ubiquitination and subsequent degradation of host MHC-I, CD86, DC-SIGN and DC-SIGNR, ICAM1 and CD1D molecules, presumably to prevent lysis of infected cells by cytotoxic T-lymphocytes and NK cell. Plays a role in the down-regulation of the host stress-induced NKG2D ligands MICA, MICB and CLEC2B, which enable immune cells expressing the NKG2D receptor to recognize and annihilate infected cells prior to viral spread. Alters monocyte metabolism and proliferation by mediating rapid internalization of cellular growth factor-binding receptor tyrosine kinases from the surface leading to increased signaling. The protein is E3 ubiquitin-protein ligase MIR2 (K5) of Homo sapiens (Human).